The chain runs to 219 residues: Large ribosomal subunit protein uL3 (219 aa).

N5-methylglutamine is present on Gln151.

It belongs to the universal ribosomal protein uL3 family. In terms of assembly, part of the 50S ribosomal subunit. Forms a cluster with proteins L14 and L19. Methylated by PrmB.

Functionally, one of the primary rRNA binding proteins, it binds directly near the 3'-end of the 23S rRNA, where it nucleates assembly of the 50S subunit. In Blochmanniella floridana, this protein is Large ribosomal subunit protein uL3.